Reading from the N-terminus, the 212-residue chain is Ribonuclease HII (212 aa).

One can recognise an RNase H type-2 domain in the interval Met-1–Ile-206. The a divalent metal cation site is built by Asp-7, Glu-8, and Asp-104.

This sequence belongs to the RNase HII family. Requires Mn(2+) as cofactor. Mg(2+) is required as a cofactor.

The protein resides in the cytoplasm. The enzyme catalyses Endonucleolytic cleavage to 5'-phosphomonoester.. Its function is as follows. Endonuclease that specifically degrades the RNA of RNA-DNA hybrids. This is Ribonuclease HII from Sulfolobus acidocaldarius (strain ATCC 33909 / DSM 639 / JCM 8929 / NBRC 15157 / NCIMB 11770).